The sequence spans 611 residues: Glutamine--fructose-6-phosphate aminotransferase [isomerizing] (611 aa).

Cys-2 acts as the Nucleophile; for GATase activity in catalysis. The Glutamine amidotransferase type-2 domain occupies Cys-2 to Asp-219. 2 SIS domains span residues Ala-287 to Arg-427 and Val-460 to Pro-601. Lys-606 serves as the catalytic For Fru-6P isomerization activity.

In terms of assembly, homodimer.

Its subcellular location is the cytoplasm. It carries out the reaction D-fructose 6-phosphate + L-glutamine = D-glucosamine 6-phosphate + L-glutamate. Functionally, catalyzes the first step in hexosamine metabolism, converting fructose-6P into glucosamine-6P using glutamine as a nitrogen source. This Pseudomonas aeruginosa (strain ATCC 15692 / DSM 22644 / CIP 104116 / JCM 14847 / LMG 12228 / 1C / PRS 101 / PAO1) protein is Glutamine--fructose-6-phosphate aminotransferase [isomerizing].